Here is a 285-residue protein sequence, read N- to C-terminus: Polyamine aminopropyltransferase (285 aa).

In terms of domain architecture, PABS spans 2-237 (EFWFSELHSP…GYWLFGFASK (236 aa)). Position 31 (glutamine 31) interacts with S-methyl-5'-thioadenosine. Aspartate 86 provides a ligand contact to spermidine. S-methyl-5'-thioadenosine is bound by residues glutamate 106 and 137 to 138 (DA). Aspartate 155 (proton acceptor) is an active-site residue.

This sequence belongs to the spermidine/spermine synthase family. As to quaternary structure, homodimer or homotetramer.

It localises to the cytoplasm. It carries out the reaction S-adenosyl 3-(methylsulfanyl)propylamine + putrescine = S-methyl-5'-thioadenosine + spermidine + H(+). It functions in the pathway amine and polyamine biosynthesis; spermidine biosynthesis; spermidine from putrescine: step 1/1. In terms of biological role, catalyzes the irreversible transfer of a propylamine group from the amino donor S-adenosylmethioninamine (decarboxy-AdoMet) to putrescine (1,4-diaminobutane) to yield spermidine. The sequence is that of Polyamine aminopropyltransferase from Lachnospira eligens (strain ATCC 27750 / DSM 3376 / VPI C15-48 / C15-B4) (Eubacterium eligens).